We begin with the raw amino-acid sequence, 67 residues long: Peptide Hp1036 (67 aa).

The first 23 residues, 1 to 23, serve as a signal peptide directing secretion; it reads MKTQFAILLITLVLFQMFSQSDA. Phe36 carries the post-translational modification Phenylalanine amide. The propeptide occupies 40 to 67; that stretch reads GLNDLSDLDELFDGEISEADVDFLREIM.

The protein belongs to the non-disulfide-bridged peptide (NDBP) superfamily. Short antimicrobial peptide (group 4) family. In terms of tissue distribution, expressed by the venom gland.

It is found in the secreted. The protein resides in the target cell membrane. Functionally, amphipathic peptide with antibacterial activities. Shows antiviral activities against the herpes simplex virus type-1. It potently inhibits the initial infection by provoking the rupture of viral envelop and the dissociation of proteins from the virions (EC(50) is 0.43 uM). It also effectively inhibits viral attachment (EC(50) is 2.87 uM), viral entry (EC(50) is 4.29 uM) and viral proliferation after infection (EC(50) is 7.86). Morever, it enters mammalian tested cells (Vero) and reduces the intracellular infectivity. This Heterometrus petersii (Asian forest scorpion) protein is Peptide Hp1036.